An 892-amino-acid polypeptide reads, in one-letter code: Putative leucine-rich repeat receptor-like serine/threonine-protein kinase At2g04300 (892 aa).

The first 26 residues, 1–26 (MKTHPQAILLCVLFFITFGLLHVVEA), serve as a signal peptide directing secretion. Residues 27 to 523 (GNQEGFISLD…GAKKKNVVVL (497 aa)) lie on the Extracellular side of the membrane. N-linked (GlcNAc...) asparagine glycosylation is found at Asn99, Asn186, Asn241, Asn267, and Asn294. LRR repeat units lie at residues 375–396 (IKNIQNTYGVSKTSWQGDPCVP), 399–422 (FMWDGLNCNNSYISTPPTITFLNL), 423–444 (SSSHLTGIIASAIQNLTHLQNL), and 447–467 (SNNNLTGGVPEFLAGLKSLLV). N-linked (GlcNAc...) asparagine glycosylation is found at Asn407, Asn421, Asn437, Asn450, and Asn469. A helical transmembrane segment spans residues 524–544 (VVVSIALVVVLGSALALFLVF). Topologically, residues 545 to 892 (RKRKTPRNEV…FGTEYTPEAR (348 aa)) are cytoplasmic. At Thr573 the chain carries Phosphothreonine. One can recognise a Protein kinase domain in the interval 582-855 (NNFEKILGKG…QVVIELNECL (274 aa)). Residues 588–596 (LGKGGFGMV) and Lys610 each bind ATP. The residue at position 655 (Tyr655) is a Phosphotyrosine. Asp707 acts as the Proton acceptor in catalysis. Phosphothreonine is present on residues Thr742 and Thr747. Phosphotyrosine is present on Tyr755.

The protein belongs to the protein kinase superfamily. Ser/Thr protein kinase family.

Its subcellular location is the cell membrane. The enzyme catalyses L-seryl-[protein] + ATP = O-phospho-L-seryl-[protein] + ADP + H(+). It carries out the reaction L-threonyl-[protein] + ATP = O-phospho-L-threonyl-[protein] + ADP + H(+). This chain is Putative leucine-rich repeat receptor-like serine/threonine-protein kinase At2g04300, found in Arabidopsis thaliana (Mouse-ear cress).